The sequence spans 245 residues: Collagen triple helix repeat-containing protein 1 (245 aa).

The N-terminal stretch at Met-1 to Ala-32 is a signal peptide. Residues Gln-59–Lys-92 form the Collagen-like domain. The disordered stretch occupies residues Val-64–Gly-87. N-linked (GlcNAc...) asparagine glycosylation is present at Asn-188.

N-glycosylated. As to expression, expressed after injury in the carotid arteries (at protein level). Expressed in brain, lung, and after injury in fibroblasts of the adventitia and the neointima of the arteries.

The protein localises to the secreted. It is found in the extracellular space. Its subcellular location is the extracellular matrix. Its overexpression in smooth muscle cell lines increases their migratory ability and inhibits collagen type I expression. May act as a negative regulator of collagen matrix deposition. The chain is Collagen triple helix repeat-containing protein 1 (Cthrc1) from Rattus norvegicus (Rat).